Here is a 141-residue protein sequence, read N- to C-terminus: uncharacterized protein (141 aa).

This is an uncharacterized protein from Homo sapiens (Human).